The sequence spans 290 residues: Nucleotide-binding protein Xfasm12_0753 (290 aa).

Residue 13 to 20 (GLSGSGKS) coordinates ATP. 65-68 (DIRS) is a GTP binding site.

The protein belongs to the RapZ-like family.

Functionally, displays ATPase and GTPase activities. This Xylella fastidiosa (strain M12) protein is Nucleotide-binding protein Xfasm12_0753.